The chain runs to 146 residues: Nitric oxide reductase subunit C (146 aa).

The chain crosses the membrane as a helical; Signal-anchor span at residues 13-29 (IYFGGSVFFILLFLALT). Heme c is bound by residues Cys-61, Cys-64, and His-65.

In terms of assembly, heterodimer of cytochromes b (large subunit) and c (small subunit).

It localises to the cell membrane. Component of the anaerobic respiratory chain that transforms nitrate to dinitrogen (denitrification). This chain is Nitric oxide reductase subunit C (norC), found in Pseudomonas aeruginosa (strain ATCC 15692 / DSM 22644 / CIP 104116 / JCM 14847 / LMG 12228 / 1C / PRS 101 / PAO1).